A 177-amino-acid polypeptide reads, in one-letter code: ATP synthase subunit delta (177 aa).

Belongs to the ATPase delta chain family. As to quaternary structure, F-type ATPases have 2 components, F(1) - the catalytic core - and F(0) - the membrane proton channel. F(1) has five subunits: alpha(3), beta(3), gamma(1), delta(1), epsilon(1). F(0) has three main subunits: a(1), b(2) and c(10-14). The alpha and beta chains form an alternating ring which encloses part of the gamma chain. F(1) is attached to F(0) by a central stalk formed by the gamma and epsilon chains, while a peripheral stalk is formed by the delta and b chains.

Its subcellular location is the cell inner membrane. Functionally, f(1)F(0) ATP synthase produces ATP from ADP in the presence of a proton or sodium gradient. F-type ATPases consist of two structural domains, F(1) containing the extramembraneous catalytic core and F(0) containing the membrane proton channel, linked together by a central stalk and a peripheral stalk. During catalysis, ATP synthesis in the catalytic domain of F(1) is coupled via a rotary mechanism of the central stalk subunits to proton translocation. In terms of biological role, this protein is part of the stalk that links CF(0) to CF(1). It either transmits conformational changes from CF(0) to CF(1) or is implicated in proton conduction. This Shewanella sp. (strain MR-4) protein is ATP synthase subunit delta.